A 192-amino-acid chain; its full sequence is MERLIEELRKEIKADTEMTFTVSDVDSLLTADFESKHTAHSERGNSSPQYTETPLTDDAVATMDGWLDESYLHTINDKDVVAQLDEILLLLIAIRDGACGKELLQDIRRLFGTDLSPGTVYPHLNDLADEGMLDMTELAKRKVYRISDAEATFDTVEPAVNRLVTFSLVLKALMIDCNARYLQTQRSESNER.

140 to 145 (KRKVYR) contacts DNA. A leucine-zipper region spans residues 150–181 (EATFDTVEPAVNRLVTFSLVLKALMIDCNARY).

Interacts with GvpD, also with c-GvpD from H.salinarum.

It is found in the cytoplasm. Its activity is regulated as follows. The amount of protein that accumulates is controlled by GvpD; GvpD causes a reduction in the amount of GvpE, preventing accumulation of excessive amounts of gas vesicles. Functionally, plays a regulatory role in gas vesicle synthesis, activates transcription of the gvpA operon, and probably of the gvpD operon. Gas vesicles are hollow, gas filled proteinaceous nanostructures found in some microorganisms. They allow positioning of halobacteria at the optimal depth for growth in the poorly aerated, shallow brine pools of their habitat. In terms of biological role, expression of a 9.5 kb mc-vac DNA fragment containing 2 divergently transcribed regions (gvpD-gvpE-gvpF-gvpG-gvpH-gvpI-gvpJ-gvpK-gvpL-gvpM and gvpA-gvpC-gvpN-gvpO) allows H.volcanii to produce gas vesicles. The sequence is that of Transcriptional activator GvpE from Haloferax mediterranei (strain ATCC 33500 / DSM 1411 / JCM 8866 / NBRC 14739 / NCIMB 2177 / R-4) (Halobacterium mediterranei).